Here is a 305-residue protein sequence, read N- to C-terminus: Guanine nucleotide-binding protein subunit beta (305 aa).

WD repeat units follow at residues 19–49, 61–91, 104–133, 145–176, 188–218, 231–260, and 272–302; these read NKLG…LVWD, APSV…VVYD, GHAG…MFWD, GHEM…KLWD, GNTS…RCFD, PSSS…EVWD, and GHEN…RLWS.

Belongs to the WD repeat G protein beta family. G proteins are composed of 3 units, alpha, beta and gamma. Binding of the beta-gamma subunit complex (git5-git11) to the alpha subunit (gpa2) facilitates interaction with GPCR git3.

It localises to the cell membrane. Its subcellular location is the cytoplasm. The protein localises to the nucleus. Beta subunit of the heterotrimeric guanine nucleotide-binding protein (G protein) involved in glucose-induced cAMP signaling. The beta-gamma subunits (git5-git11) promote binding of the alpha subunit gpa2 to GPCR git3, which senses extracellular glucose, to activate cAMP-PKA signaling and repress sexual development and gluconeogenesis. This Schizosaccharomyces pombe (strain 972 / ATCC 24843) (Fission yeast) protein is Guanine nucleotide-binding protein subunit beta (git5).